The primary structure comprises 132 residues: Small ribosomal subunit protein uS8 (132 aa).

Belongs to the universal ribosomal protein uS8 family. In terms of assembly, part of the 30S ribosomal subunit. Contacts proteins S5 and S12.

In terms of biological role, one of the primary rRNA binding proteins, it binds directly to 16S rRNA central domain where it helps coordinate assembly of the platform of the 30S subunit. This chain is Small ribosomal subunit protein uS8, found in Bacillus licheniformis (strain ATCC 14580 / DSM 13 / JCM 2505 / CCUG 7422 / NBRC 12200 / NCIMB 9375 / NCTC 10341 / NRRL NRS-1264 / Gibson 46).